The chain runs to 515 residues: Probable malate:quinone oxidoreductase (515 aa).

The protein belongs to the MQO family. FAD serves as cofactor.

The catalysed reaction is (S)-malate + a quinone = a quinol + oxaloacetate. It participates in carbohydrate metabolism; tricarboxylic acid cycle; oxaloacetate from (S)-malate (quinone route): step 1/1. The chain is Probable malate:quinone oxidoreductase from Blochmanniella pennsylvanica (strain BPEN).